A 298-amino-acid polypeptide reads, in one-letter code: Probable prolyl 4-hydroxylase 4 (298 aa).

The Cytoplasmic portion of the chain corresponds to 1 to 6 (MARRGL). The chain crosses the membrane as a helical; Signal-anchor for type II membrane protein span at residues 7-25 (LISFFAIFSVLLQSSTSLI). At 26 to 298 (SSSSVFVNPS…GYCRRSCKAC (273 aa)) the chain is on the lumenal side. The N-linked (GlcNAc...) asparagine glycan is linked to Asn-77. The Fe2OG dioxygenase domain maps to 120–245 (NGEDIQVLRY…KWSATKWIHV (126 aa)). Fe cation is bound by residues His-138 and Asp-140. Residue Asn-164 is glycosylated (N-linked (GlcNAc...) asparagine). His-226 serves as a coordination point for Fe cation. A 2-oxoglutarate-binding site is contributed by Lys-236. N-linked (GlcNAc...) asparagine glycosylation is found at Asn-257 and Asn-262. Residues 258–298 (CTDMNESCERWAVLGECTKNPEYMVGTTELPGYCRRSCKAC) form the ShKT domain. 3 cysteine pairs are disulfide-bonded: Cys-258-Cys-298, Cys-265-Cys-291, and Cys-274-Cys-295.

The protein belongs to the P4HA family. Fe(2+) is required as a cofactor. L-ascorbate serves as cofactor.

The protein resides in the endoplasmic reticulum membrane. The enzyme catalyses L-prolyl-[collagen] + 2-oxoglutarate + O2 = trans-4-hydroxy-L-prolyl-[collagen] + succinate + CO2. In terms of biological role, catalyzes the post-translational formation of 4-hydroxyproline in -Xaa-Pro-Gly- sequences in proline-rich peptide sequences of plant glycoproteins and other proteins. Hydroxyprolines are important constituent of many plant cell wall glycoproteins such as extensins, hydroxyproline-rich glycoproteins, lectins and arabinogalactan proteins. The sequence is that of Probable prolyl 4-hydroxylase 4 from Arabidopsis thaliana (Mouse-ear cress).